The sequence spans 205 residues: Recombination protein RecR (205 aa).

A C4-type zinc finger spans residues 58-75; sequence CSECQNVTDRDSDPCVLC. One can recognise a Toprim domain in the interval 83–182; the sequence is TVICVVESPV…AVSKIARGIP (100 aa).

The protein belongs to the RecR family.

Functionally, may play a role in DNA repair. It seems to be involved in an RecBC-independent recombinational process of DNA repair. It may act with RecF and RecO. This Chlorobium phaeobacteroides (strain DSM 266 / SMG 266 / 2430) protein is Recombination protein RecR.